We begin with the raw amino-acid sequence, 173 residues long: Crossover junction endodeoxyribonuclease RuvC (173 aa).

Residues aspartate 8, glutamate 67, and aspartate 139 contribute to the active site. Mg(2+)-binding residues include aspartate 8, glutamate 67, and aspartate 139.

Belongs to the RuvC family. As to quaternary structure, homodimer which binds Holliday junction (HJ) DNA. The HJ becomes 2-fold symmetrical on binding to RuvC with unstacked arms; it has a different conformation from HJ DNA in complex with RuvA. In the full resolvosome a probable DNA-RuvA(4)-RuvB(12)-RuvC(2) complex forms which resolves the HJ. It depends on Mg(2+) as a cofactor.

It is found in the cytoplasm. The catalysed reaction is Endonucleolytic cleavage at a junction such as a reciprocal single-stranded crossover between two homologous DNA duplexes (Holliday junction).. In terms of biological role, the RuvA-RuvB-RuvC complex processes Holliday junction (HJ) DNA during genetic recombination and DNA repair. Endonuclease that resolves HJ intermediates. Cleaves cruciform DNA by making single-stranded nicks across the HJ at symmetrical positions within the homologous arms, yielding a 5'-phosphate and a 3'-hydroxyl group; requires a central core of homology in the junction. The consensus cleavage sequence is 5'-(A/T)TT(C/G)-3'. Cleavage occurs on the 3'-side of the TT dinucleotide at the point of strand exchange. HJ branch migration catalyzed by RuvA-RuvB allows RuvC to scan DNA until it finds its consensus sequence, where it cleaves and resolves the cruciform DNA. The polypeptide is Crossover junction endodeoxyribonuclease RuvC (Cronobacter sakazakii (strain ATCC BAA-894) (Enterobacter sakazakii)).